Reading from the N-terminus, the 311-residue chain is Probable dihydroorotate dehydrogenase A (fumarate) (311 aa).

Substrate is bound by residues lysine 45, 69–73 (NSMGL), and asparagine 128. 45–46 (KT) provides a ligand contact to FMN. Position 128 (asparagine 128) interacts with FMN. The active-site Nucleophile is the cysteine 131. FMN-binding residues include lysine 165 and valine 193. 194 to 195 (NS) serves as a coordination point for substrate. FMN is bound by residues glycine 220, 248 to 249 (GG), and 270 to 271 (GT).

Belongs to the dihydroorotate dehydrogenase family. Type 1 subfamily. As to quaternary structure, homodimer. FMN serves as cofactor.

Its subcellular location is the cytoplasm. The enzyme catalyses (S)-dihydroorotate + fumarate = orotate + succinate. It participates in pyrimidine metabolism; UMP biosynthesis via de novo pathway. Its function is as follows. Catalyzes the conversion of dihydroorotate to orotate with fumarate as the electron acceptor. The sequence is that of Probable dihydroorotate dehydrogenase A (fumarate) (pyrDA) from Streptococcus pneumoniae serotype 4 (strain ATCC BAA-334 / TIGR4).